The sequence spans 145 residues: Alpha-amylase/trypsin inhibitor CM2 (145 aa).

A signal peptide spans methionine 1 to alanine 25.

This sequence belongs to the protease inhibitor I6 (cereal trypsin/alpha-amylase inhibitor) family. In terms of tissue distribution, developing endosperm.

The protein resides in the secreted. Alpha-amylase/trypsin inhibitor. It could be involved in insect defense mechanisms. In Triticum aestivum (Wheat), this protein is Alpha-amylase/trypsin inhibitor CM2.